The sequence spans 299 residues: ATP phosphoribosyltransferase (299 aa).

The protein belongs to the ATP phosphoribosyltransferase family. Long subfamily. As to quaternary structure, equilibrium between an active dimeric form, an inactive hexameric form and higher aggregates. Interconversion between the various forms is largely reversible and is influenced by the natural substrates and inhibitors of the enzyme. Requires Mg(2+) as cofactor.

Its subcellular location is the cytoplasm. It catalyses the reaction 1-(5-phospho-beta-D-ribosyl)-ATP + diphosphate = 5-phospho-alpha-D-ribose 1-diphosphate + ATP. It functions in the pathway amino-acid biosynthesis; L-histidine biosynthesis; L-histidine from 5-phospho-alpha-D-ribose 1-diphosphate: step 1/9. Its activity is regulated as follows. Feedback inhibited by histidine. Catalyzes the condensation of ATP and 5-phosphoribose 1-diphosphate to form N'-(5'-phosphoribosyl)-ATP (PR-ATP). Has a crucial role in the pathway because the rate of histidine biosynthesis seems to be controlled primarily by regulation of HisG enzymatic activity. This is ATP phosphoribosyltransferase from Erwinia tasmaniensis (strain DSM 17950 / CFBP 7177 / CIP 109463 / NCPPB 4357 / Et1/99).